A 71-amino-acid polypeptide reads, in one-letter code: DNA-directed RNA polymerase subunit omega (71 aa).

The protein belongs to the RNA polymerase subunit omega family. In terms of assembly, the RNAP catalytic core consists of 2 alpha, 1 beta, 1 beta' and 1 omega subunit. When a sigma factor is associated with the core the holoenzyme is formed, which can initiate transcription.

It carries out the reaction RNA(n) + a ribonucleoside 5'-triphosphate = RNA(n+1) + diphosphate. Functionally, promotes RNA polymerase assembly. Latches the N- and C-terminal regions of the beta' subunit thereby facilitating its interaction with the beta and alpha subunits. In Syntrophomonas wolfei subsp. wolfei (strain DSM 2245B / Goettingen), this protein is DNA-directed RNA polymerase subunit omega.